The sequence spans 437 residues: MNGTGSVGHRWNSLSPEPHSGTESTASTPFVKSEFPFDDDLFGIDQVNNVKPHPMDMPCNLPIQPIEYNRRFSKDADHSTFVKNEIEENILNFNVNPEIAQDNGLDTQQIDIYRDLILRHLIQDISTTCAKLGLPNDFYLWSSEHGARWINEMCMQFNLQPPRNCSITGIDLLGMSQKDFEMILPAGGDTLHAQLQVWKTGTSDYVKAFENYHPPVTVQSSGMTAAENNMQSKTNWLASTNNQTNNMAAAENPNHPFFNGNGGYPNMSMSSFFQQGTVLPSPSNSDTSSNGSSQDMNDDDIDLHMNNSNCGFSNFFHNQGYMNSPIDAMCNGSEGDDDERAYTRHQGTVHLWQFIRELLDQPKQYSACVRWVDRDEGTFKIESSLLLARYWGQRKNRSQMNYDKLSRSLRQYYKKGIIQKPEKKQRLVYKFLPPYNL.

Residues 1–30 (MNGTGSVGHRWNSLSPEPHSGTESTASTPF) are disordered. Residues 21 to 30 (GTESTASTPF) show a composition bias toward polar residues. Lys-32 is covalently cross-linked (Glycyl lysine isopeptide (Lys-Gly) (interchain with G-Cter in SUMO)). Position 73 is a phosphoserine (Ser-73). A Glycyl lysine isopeptide (Lys-Gly) (interchain with G-Cter in SUMO) cross-link involves residue Lys-83. Residues 120-202 (HLIQDISTTC…AQLQVWKTGT (83 aa)) form the PNT domain. The segment at 275 to 302 (QGTVLPSPSNSDTSSNGSSQDMNDDDID) is disordered. Residues 280–293 (PSPSNSDTSSNGSS) are compositionally biased toward low complexity. Positions 349–432 (VHLWQFIREL…KKQRLVYKFL (84 aa)) form a DNA-binding region, ETS.

The protein belongs to the ETS family. As to quaternary structure, may interact with cebp-1. May interact with tdpt-1 to facilitate its sumoylation. In terms of processing, phosphorylation is required for axon regeneration. Sumoylated; sumoylation inhibits phosphorylation, which is required for probable interaction with cebp-1 and consequently the expression of svh-2. Expressed in cells of the anterior and posterior bulbs of the pharynx, seam cells, a few unidentified cells of the vulva, the hypodermis, several unidentified neurons, labial socket cells of the head and rectal cells.

The protein resides in the nucleus. In terms of biological role, transcription factor which binds to 5'-GGAA/T-3' DNA consensus sequences. Both positively and negatively regulates the expression of target genes. Plays a role in the regulation of adult lifespan, which may in part be through modulation of daf-16 activity. Regulates the expression of genes such as svh-2 in response to axon injury and in addition, may function downstream of the cAMP signaling pathway to promote axon regeneration. Regulates the expression of lipid metabolism genes and may also control the expression of the RNA-binding protein rege-1 which too has been implicated in the control of fat accumulation. This Caenorhabditis elegans protein is Transcription factor ets-4.